Consider the following 294-residue polypeptide: MINGIINLKKEAGMTSHDAVFKLRKLLQEKKIGHGGTLDPDVVGVLPIAVGKATRVIEYMTEAGKVYEGQVTLGYSTTTEDASGEVVARSSLPAVLTEELVDQTMTTFLGKITQTPPMYSAVKVNGRKLYEYARAGESVERPRREVTISLFERTSPLNFTEDGLCRFSFKVACGKGTYVRTLAVDLGRALGVESHMSFLQRSASAGLTLETAYTLGEIADMVSKQEMSFLLPIEYGVADLPKMVIDDTELTEISFGRRLSLPSQEPLLAAFHGEKVIAILEKRDQEYKPKKVLI.

Catalysis depends on aspartate 39, which acts as the Nucleophile.

The protein belongs to the pseudouridine synthase TruB family. Type 1 subfamily.

The catalysed reaction is uridine(55) in tRNA = pseudouridine(55) in tRNA. In terms of biological role, responsible for synthesis of pseudouridine from uracil-55 in the psi GC loop of transfer RNAs. The protein is tRNA pseudouridine synthase B of Streptococcus pyogenes serotype M3 (strain ATCC BAA-595 / MGAS315).